The chain runs to 181 residues: Large ribosomal subunit protein uL5c (181 aa).

The protein belongs to the universal ribosomal protein uL5 family. As to quaternary structure, part of the 50S ribosomal subunit; contacts the 5S rRNA.

It localises to the plastid. It is found in the chloroplast. In terms of biological role, binds 5S rRNA, forms part of the central protuberance of the 50S subunit. This chain is Large ribosomal subunit protein uL5c (rpl5), found in Rhodomonas salina (Cryptomonas salina).